Consider the following 405-residue polypeptide: Acetate kinase (405 aa).

Asn-7 lines the Mg(2+) pocket. Lys-14 is an ATP binding site. Arg-98 contributes to the substrate binding site. Asp-155 (proton donor/acceptor) is an active-site residue. Residues 214-218, 289-291, and 337-341 each bind ATP; these read HLGNG, DLR, and GVGEN. Residue Glu-390 participates in Mg(2+) binding.

The protein belongs to the acetokinase family. In terms of assembly, homodimer. The cofactor is Mg(2+). Mn(2+) is required as a cofactor.

It is found in the cytoplasm. It carries out the reaction acetate + ATP = acetyl phosphate + ADP. Its pathway is metabolic intermediate biosynthesis; acetyl-CoA biosynthesis; acetyl-CoA from acetate: step 1/2. Its function is as follows. Catalyzes the formation of acetyl phosphate from acetate and ATP. Can also catalyze the reverse reaction. The polypeptide is Acetate kinase (Gloeothece citriformis (strain PCC 7424) (Cyanothece sp. (strain PCC 7424))).